The primary structure comprises 467 residues: Probable protein phosphatase 2C 55 (467 aa).

One can recognise a PPM-type phosphatase domain in the interval 222–458; it reads SCYLPHPDKE…DDITVVVSYV (237 aa). The Mn(2+) site is built by Asp-252, Gly-253, Asp-383, and Asp-449.

This sequence belongs to the PP2C family. Mg(2+) is required as a cofactor. It depends on Mn(2+) as a cofactor.

The catalysed reaction is O-phospho-L-seryl-[protein] + H2O = L-seryl-[protein] + phosphate. It carries out the reaction O-phospho-L-threonyl-[protein] + H2O = L-threonyl-[protein] + phosphate. The polypeptide is Probable protein phosphatase 2C 55 (Arabidopsis thaliana (Mouse-ear cress)).